The sequence spans 479 residues: Ribosomal RNA small subunit methyltransferase F (479 aa).

Residues 125 to 131 (AAAPGSK), E149, D176, and D194 each bind S-adenosyl-L-methionine. Catalysis depends on C247, which acts as the Nucleophile.

Belongs to the class I-like SAM-binding methyltransferase superfamily. RsmB/NOP family.

The protein resides in the cytoplasm. It carries out the reaction cytidine(1407) in 16S rRNA + S-adenosyl-L-methionine = 5-methylcytidine(1407) in 16S rRNA + S-adenosyl-L-homocysteine + H(+). Its function is as follows. Specifically methylates the cytosine at position 1407 (m5C1407) of 16S rRNA. This chain is Ribosomal RNA small subunit methyltransferase F, found in Escherichia coli (strain ATCC 8739 / DSM 1576 / NBRC 3972 / NCIMB 8545 / WDCM 00012 / Crooks).